Here is a 153-residue protein sequence, read N- to C-terminus: Small ribosomal subunit protein uS13 (153 aa).

The segment at 129 to 153 (RGQRTKSTFRHGSSVGVSRTRPTGN) is disordered. The segment covering 143–153 (VGVSRTRPTGN) has biased composition (polar residues).

Belongs to the universal ribosomal protein uS13 family. As to quaternary structure, part of the 30S ribosomal subunit. Forms a loose heterodimer with protein S19. Forms two bridges to the 50S subunit in the 70S ribosome.

Functionally, located at the top of the head of the 30S subunit, it contacts several helices of the 16S rRNA. In the 70S ribosome it contacts the 23S rRNA (bridge B1a) and protein L5 of the 50S subunit (bridge B1b), connecting the 2 subunits; these bridges are implicated in subunit movement. The sequence is that of Small ribosomal subunit protein uS13 from Methanosphaera stadtmanae (strain ATCC 43021 / DSM 3091 / JCM 11832 / MCB-3).